The sequence spans 787 residues: Pyridoxal-dependent decarboxylase domain-containing protein 1 (787 aa).

Basic and acidic residues predominate over residues 26–44; that stretch reads MLEKSPRRTEEENGKKPVS. Positions 26-52 are disordered; sequence MLEKSPRRTEEENGKKPVSEDIPGPLQ. Ser-652 bears the Phosphoserine mark. The disordered stretch occupies residues 682 to 787; the sequence is QGTGVTPPPT…SQVEELERLR (106 aa). Residues Thr-687 and Thr-691 each carry the phosphothreonine modification. Phosphoserine is present on residues Ser-710, Ser-718, Ser-722, and Ser-748. Positions 725–748 are enriched in basic and acidic residues; it reads HIEDLEKVEQLSSGLEHDNLEAHS. The segment covering 759-771 has biased composition (polar residues); it reads TARQTEALQNQAQ. Residues 772–787 are compositionally biased toward basic and acidic residues; that stretch reads HQEDDHSQVEELERLR. Phosphoserine is present on Ser-778.

This sequence belongs to the group II decarboxylase family. It depends on pyridoxal 5'-phosphate as a cofactor.

In Mus musculus (Mouse), this protein is Pyridoxal-dependent decarboxylase domain-containing protein 1 (Pdxdc1).